The sequence spans 305 residues: MHTDLRADQKAEVLIEALPWLEEFAGQRIVVKYGGNAMVDDHLKQCFAEDMVFLRQVGLHPIVVHGGGPQISHMLKALGIKSEFKGGLRVTTPEAMDVVRMVLTGKVSRELVGLINAHGPLAVGMSGEDGGLFSAMQRRPVIDGKPTDIGLVGDVVSVDASAVEDLVAAGRIPVVSSVAPNEEDATEVLNVNADSAAAALAAAVGAHKLVILTDVDGLYADWPDKNSLIGRIGVENLRDMLPDLESGMRPKMEACVRAIDGGVPQAHVIDGRKPHSILNEIFTSAGIGTMVMPDEGLEMRSSYGY.

Substrate contacts are provided by residues 67–68 (GG), R89, and N190.

It belongs to the acetylglutamate kinase family. ArgB subfamily.

It is found in the cytoplasm. The catalysed reaction is N-acetyl-L-glutamate + ATP = N-acetyl-L-glutamyl 5-phosphate + ADP. Its pathway is amino-acid biosynthesis; L-arginine biosynthesis; N(2)-acetyl-L-ornithine from L-glutamate: step 2/4. Catalyzes the ATP-dependent phosphorylation of N-acetyl-L-glutamate. This Bifidobacterium longum (strain NCC 2705) protein is Acetylglutamate kinase.